Consider the following 152-residue polypeptide: ASP external chaperone (152 aa).

The signal sequence occupies residues 1–22 (MNKPVTLLLATLLAPLSGQLCA).

As to quaternary structure, forms a complex with the serine protease ASP in the periplasm. After translocation of the ASP-ORF2 complex from the periplasm to the extracellular space, the complex is dissociated in a pH-dependent manner.

The protein resides in the periplasm. It is found in the secreted. With respect to regulation, degraded by ASP after secretion and dissociation of the ASP-ORF2 complex. Required for the production of the active form of the Aeromonas extracellular serine protease (ASP). Acts as a chaperone that helps ASP form an active structure in the periplasm. Formation of a complex with ASP in the periplasm also inactivates the protease activity and likely protects ASP from intrinsic proteases. Dissociation of the ASP-ORF2 complex after secretion in the extracellular space generates an active ASP. The sequence is that of ASP external chaperone from Aeromonas sobria.